The following is a 173-amino-acid chain: Crossover junction endodeoxyribonuclease RuvC (173 aa).

Active-site residues include Asp8, Glu67, and Asp139. Asp8, Glu67, and Asp139 together coordinate Mg(2+).

This sequence belongs to the RuvC family. In terms of assembly, homodimer which binds Holliday junction (HJ) DNA. The HJ becomes 2-fold symmetrical on binding to RuvC with unstacked arms; it has a different conformation from HJ DNA in complex with RuvA. In the full resolvosome a probable DNA-RuvA(4)-RuvB(12)-RuvC(2) complex forms which resolves the HJ. It depends on Mg(2+) as a cofactor.

It is found in the cytoplasm. It carries out the reaction Endonucleolytic cleavage at a junction such as a reciprocal single-stranded crossover between two homologous DNA duplexes (Holliday junction).. Functionally, the RuvA-RuvB-RuvC complex processes Holliday junction (HJ) DNA during genetic recombination and DNA repair. Endonuclease that resolves HJ intermediates. Cleaves cruciform DNA by making single-stranded nicks across the HJ at symmetrical positions within the homologous arms, yielding a 5'-phosphate and a 3'-hydroxyl group; requires a central core of homology in the junction. The consensus cleavage sequence is 5'-(A/T)TT(C/G)-3'. Cleavage occurs on the 3'-side of the TT dinucleotide at the point of strand exchange. HJ branch migration catalyzed by RuvA-RuvB allows RuvC to scan DNA until it finds its consensus sequence, where it cleaves and resolves the cruciform DNA. The sequence is that of Crossover junction endodeoxyribonuclease RuvC from Salmonella paratyphi C (strain RKS4594).